The following is a 450-amino-acid chain: Glucose-6-phosphate isomerase (450 aa).

Glu-290 functions as the Proton donor in the catalytic mechanism. Residues His-311 and Lys-425 contribute to the active site.

It belongs to the GPI family.

The protein resides in the cytoplasm. The enzyme catalyses alpha-D-glucose 6-phosphate = beta-D-fructose 6-phosphate. The protein operates within carbohydrate biosynthesis; gluconeogenesis. Its pathway is carbohydrate degradation; glycolysis; D-glyceraldehyde 3-phosphate and glycerone phosphate from D-glucose: step 2/4. Catalyzes the reversible isomerization of glucose-6-phosphate to fructose-6-phosphate. The polypeptide is Glucose-6-phosphate isomerase (Lactiplantibacillus plantarum (strain ATCC BAA-793 / NCIMB 8826 / WCFS1) (Lactobacillus plantarum)).